The chain runs to 89 residues: Cell division topological specificity factor (89 aa).

This sequence belongs to the MinE family.

In terms of biological role, prevents the cell division inhibition by proteins MinC and MinD at internal division sites while permitting inhibition at polar sites. This ensures cell division at the proper site by restricting the formation of a division septum at the midpoint of the long axis of the cell. The sequence is that of Cell division topological specificity factor from Sodalis glossinidius (strain morsitans).